An 857-amino-acid polypeptide reads, in one-letter code: Bifunctional levopimaradiene synthase, chloroplastic (857 aa).

The N-terminal 33 residues, 1–33 (MALPSSSLSSQIHTGATTQCIPHFHGSLNAGTS), are a transit peptide targeting the chloroplast. A substrate-binding site is contributed by lysine 257. Mg(2+) contacts are provided by aspartate 390 and aspartate 392. The DXDD motif motif lies at 390 to 393 (DIDD). Lysine 477 lines the substrate pocket. Mg(2+) is bound by residues aspartate 609, aspartate 613, asparagine 753, threonine 757, and glutamate 761. The short motif at 609–613 (DDLYD) is the DDXXD motif element.

The protein belongs to the terpene synthase family. Tpsd subfamily. Mg(2+) serves as cofactor.

It localises to the plastid. The protein localises to the chloroplast. It carries out the reaction (2E,6E,10E)-geranylgeranyl diphosphate = (+)-copalyl diphosphate. The catalysed reaction is (+)-copalyl diphosphate = abieta-7,13-diene + diphosphate. It catalyses the reaction (+)-copalyl diphosphate = abieta-8(14),12-diene + diphosphate. The enzyme catalyses (+)-copalyl diphosphate = neoabietadiene + diphosphate. It participates in terpene metabolism; oleoresin biosynthesis. Its function is as follows. Involved in defensive oleoresin formation in conifers in response to insect attack or other injury. Involved in diterpene (C20) olefins biosynthesis. Bifunctional enzyme that catalyzes two sequential cyclizations of geranylgeranyl diphosphate (GGPP) to levopimaradiene. Levopimaradiene is the major products of the enzyme with abietadiene and neoabietadiene. No activity with farnesyl diphosphate (FPP) as substrate. The protein is Bifunctional levopimaradiene synthase, chloroplastic of Pinus contorta (Shore pine).